Consider the following 301-residue polypeptide: ATP synthase gamma chain (301 aa).

This sequence belongs to the ATPase gamma chain family. As to quaternary structure, F-type ATPases have 2 components, CF(1) - the catalytic core - and CF(0) - the membrane proton channel. CF(1) has five subunits: alpha(3), beta(3), gamma(1), delta(1), epsilon(1). CF(0) has three main subunits: a, b and c.

The protein localises to the cell inner membrane. Produces ATP from ADP in the presence of a proton gradient across the membrane. The gamma chain is believed to be important in regulating ATPase activity and the flow of protons through the CF(0) complex. This Helicobacter pylori (strain Shi470) protein is ATP synthase gamma chain.